The chain runs to 237 residues: Ig heavy chain Mem5 (237 aa).

2 Ig-like domains span residues 1–119 and 126–218; these read EVKL…LTVS and PSVY…KKIE. C22 and C98 are oxidised to a cystine. A d segment region spans residues 101–105; that stretch reads VDYGT. The interval 106–120 is JH2 segment; sequence NYDYWGQGTTLTVSS. A disulfide bond links C147 and C202.

The protein resides in the secreted. Functionally, anti-influenza H3N2 neuraminidase antibody. The chain is Ig heavy chain Mem5 from Mus musculus (Mouse).